A 496-amino-acid chain; its full sequence is Probable E3 ubiquitin-protein ligase XBOS32 (496 aa).

ANK repeat units follow at residues 50–79 (GRNSPLHYAAAQGHHEIVSLLLESGVEINL), 83–112 (RGQTALMQACQYGHWEVVQTLMLFNANVHR), 117–147 (NGGSALHFAALHGHARCLRLVLADYVPSMPN), 180–209 (GGLTPLHMAALNGHVECVQLLLDLGASVIE), and 223–252 (AGSTPLHYAACGGNAVCCQLLIARGASLSA). Residues 321 to 368 (CAVCLEGSCSVAAEGCKHEFCTRCALYLCSTSYTSVSPAGAIPCPLCR) form an RING-type zinc finger.

The catalysed reaction is S-ubiquitinyl-[E2 ubiquitin-conjugating enzyme]-L-cysteine + [acceptor protein]-L-lysine = [E2 ubiquitin-conjugating enzyme]-L-cysteine + N(6)-ubiquitinyl-[acceptor protein]-L-lysine.. It functions in the pathway protein modification; protein ubiquitination. In Oryza sativa subsp. japonica (Rice), this protein is Probable E3 ubiquitin-protein ligase XBOS32 (XBOS32).